A 101-amino-acid chain; its full sequence is MAIDLFCYLSIDRGAAESDLNKIRSNHSELFEGKFLISPVRDADFSLKEIAAEHGLVAESFFLVSLNDKNSADLIPIVSKILVDGFNGGAILILQDNEYRR.

Specifically interacts with the truncated CT fragment of cognate toxin protein CdiA-2, which inhibits CdiA-2 tRNA nuclease activity.

Its function is as follows. Immunity protein component of a toxin-immunity protein module, which functions as a cellular contact-dependent growth inhibition (CDI) system. CDI modules allow bacteria to communicate with and inhibit the growth of closely related neighboring bacteria in a contact-dependent fashion. Neutralizes the toxic activity of cognate toxin CdiA (C-terminal 301 residue CT fragment) upon expression in E.coli. Does not inhibit toxic activity of CdiA from other strains of B.pseudomallei. Expression of this cdiAIB locus in B.thailandensis confers protection against other bacteria carrying the locus; growth inhibition requires cellular contact. The protein is Immunity protein CdiI-2 (cdiI2) of Burkholderia pseudomallei (strain 1026b).